A 139-amino-acid polypeptide reads, in one-letter code: Arsenate reductase (139 aa).

Residues Cys-10, Cys-82, and Cys-89 each act as nucleophile in the active site. 2 cysteine pairs are disulfide-bonded: Cys-10–Cys-82 and Cys-82–Cys-89.

It belongs to the low molecular weight phosphotyrosine protein phosphatase family. Thioredoxin-coupled ArsC subfamily.

The protein localises to the cytoplasm. It carries out the reaction arsenate + [thioredoxin]-dithiol + H(+) = arsenite + [thioredoxin]-disulfide + H2O. Catalyzes the reduction of arsenate [As(V)] to arsenite [As(III)]. This is Arsenate reductase from Shouchella clausii (strain KSM-K16) (Alkalihalobacillus clausii).